The following is a 299-amino-acid chain: Release factor glutamine methyltransferase (299 aa).

S-adenosyl-L-methionine-binding positions include 134–138, aspartate 157, tryptophan 186, and asparagine 203; that span reads GTGSG. Residue 203–206 coordinates substrate; the sequence is NPPY.

Belongs to the protein N5-glutamine methyltransferase family. PrmC subfamily.

It carries out the reaction L-glutaminyl-[peptide chain release factor] + S-adenosyl-L-methionine = N(5)-methyl-L-glutaminyl-[peptide chain release factor] + S-adenosyl-L-homocysteine + H(+). Its function is as follows. Methylates the class 1 translation termination release factors RF1/PrfA and RF2/PrfB on the glutamine residue of the universally conserved GGQ motif. The protein is Release factor glutamine methyltransferase of Synechocystis sp. (strain ATCC 27184 / PCC 6803 / Kazusa).